A 194-amino-acid chain; its full sequence is MKESHFFAHLARMKLIQRWPLMRSVSPENVSEHSLQVAFVAHALALIKNKKFGGTLNPERIALLAMYHDSSEVLTGDLPTPVKYYNPEIAKEYKKIEAAAEHKLLSMLPEEFQEDFAPFLLSHSSHEEDSQIVKQADSICAYLKCLEELSAGNHEFALAKKRLDVTLQERKTPEMEYFLNTFAPSFELSLDEIS.

Substrate is bound by residues 18–19 (RW) and histidine 33. The region spanning 30–142 (VSEHSLQVAF…VKQADSICAY (113 aa)) is the HD domain. A divalent metal cation contacts are provided by histidine 33, histidine 68, and aspartate 69. Residues aspartate 69, 77–80 (DLPT), and aspartate 137 each bind substrate. Residue aspartate 137 coordinates a divalent metal cation.

It belongs to the 5DNU family. In terms of assembly, homodimer. A divalent metal cation is required as a cofactor.

The protein resides in the cytoplasm. The catalysed reaction is a 2'-deoxyribonucleoside 5'-phosphate + H2O = a 2'-deoxyribonucleoside + phosphate. In terms of biological role, catalyzes the strictly specific dephosphorylation of 2'-deoxyribonucleoside 5'-monophosphates. In Vibrio parahaemolyticus serotype O3:K6 (strain RIMD 2210633), this protein is 5'-deoxynucleotidase VP0926.